Reading from the N-terminus, the 395-residue chain is Putative 8-amino-7-oxononanoate synthase (395 aa).

Arg23 lines the substrate pocket. Residue 110–111 (GY) participates in pyridoxal 5'-phosphate binding. His135 is a substrate binding site. Pyridoxal 5'-phosphate is bound by residues Ser182, 207 to 210 (DEAH), and 239 to 242 (TFSK). N6-(pyridoxal phosphate)lysine is present on Lys242. Thr356 contributes to the substrate binding site.

Belongs to the class-II pyridoxal-phosphate-dependent aminotransferase family. BioF subfamily. In terms of assembly, homodimer. Pyridoxal 5'-phosphate is required as a cofactor.

It carries out the reaction 6-carboxyhexanoyl-[ACP] + L-alanine + H(+) = (8S)-8-amino-7-oxononanoate + holo-[ACP] + CO2. The protein operates within cofactor biosynthesis; biotin biosynthesis. In terms of biological role, catalyzes the decarboxylative condensation of pimeloyl-[acyl-carrier protein] and L-alanine to produce 8-amino-7-oxononanoate (AON), [acyl-carrier protein], and carbon dioxide. The protein is Putative 8-amino-7-oxononanoate synthase (bioF) of Bacillus cereus (strain B4264).